A 388-amino-acid chain; its full sequence is Succinate--CoA ligase [ADP-forming] subunit beta (388 aa).

An ATP-grasp domain is found at 9-245 (KELLKSYGLP…KSQENERELK (237 aa)). ATP contacts are provided by residues K46, 53-55 (GRG), E100, Y103, and E108. The Mg(2+) site is built by N200 and D214. Residues N265 and 322 to 324 (GIV) contribute to the substrate site.

The protein belongs to the succinate/malate CoA ligase beta subunit family. Heterotetramer of two alpha and two beta subunits. It depends on Mg(2+) as a cofactor.

It carries out the reaction succinate + ATP + CoA = succinyl-CoA + ADP + phosphate. The enzyme catalyses GTP + succinate + CoA = succinyl-CoA + GDP + phosphate. The protein operates within carbohydrate metabolism; tricarboxylic acid cycle; succinate from succinyl-CoA (ligase route): step 1/1. Succinyl-CoA synthetase functions in the citric acid cycle (TCA), coupling the hydrolysis of succinyl-CoA to the synthesis of either ATP or GTP and thus represents the only step of substrate-level phosphorylation in the TCA. The beta subunit provides nucleotide specificity of the enzyme and binds the substrate succinate, while the binding sites for coenzyme A and phosphate are found in the alpha subunit. The polypeptide is Succinate--CoA ligase [ADP-forming] subunit beta (Psychrobacter arcticus (strain DSM 17307 / VKM B-2377 / 273-4)).